The primary structure comprises 548 residues: Membrane protein insertase YidC (548 aa).

The helical transmembrane segment at 6–26 threads the bilayer; it reads NLLVIALLFVSFMIWQAWEQD. The segment at 28–56 is disordered; sequence NPQPQTQQTTQTTTTAAGSAADQGVPASG. Residues 29 to 42 are compositionally biased toward low complexity; the sequence is PQPQTQQTTQTTTT. Helical transmembrane passes span 350–370, 424–444, 458–478, and 499–519; these read FVGNWGFSIIIITFIVRGIMY, FPLIIQMPIFLALYYMLMGSI, LSAQDPYYILPILMGVTMFFI, and PVIFTVFFLWFPSGLVLYYIV.

It belongs to the OXA1/ALB3/YidC family. Type 1 subfamily. In terms of assembly, interacts with the Sec translocase complex via SecD. Specifically interacts with transmembrane segments of nascent integral membrane proteins during membrane integration.

The protein localises to the cell inner membrane. Functionally, required for the insertion and/or proper folding and/or complex formation of integral membrane proteins into the membrane. Involved in integration of membrane proteins that insert both dependently and independently of the Sec translocase complex, as well as at least some lipoproteins. Aids folding of multispanning membrane proteins. The sequence is that of Membrane protein insertase YidC from Salmonella dublin (strain CT_02021853).